A 312-amino-acid chain; its full sequence is Glyoxylate/hydroxypyruvate reductase A (312 aa).

Arginine 227 is an active-site residue. The Proton donor role is filled by histidine 275.

This sequence belongs to the D-isomer specific 2-hydroxyacid dehydrogenase family. GhrA subfamily.

It localises to the cytoplasm. The catalysed reaction is glycolate + NADP(+) = glyoxylate + NADPH + H(+). The enzyme catalyses (R)-glycerate + NAD(+) = 3-hydroxypyruvate + NADH + H(+). It carries out the reaction (R)-glycerate + NADP(+) = 3-hydroxypyruvate + NADPH + H(+). Catalyzes the NADPH-dependent reduction of glyoxylate and hydroxypyruvate into glycolate and glycerate, respectively. This is Glyoxylate/hydroxypyruvate reductase A from Salmonella choleraesuis (strain SC-B67).